Consider the following 63-residue polypeptide: MNNKINNIKITQVHSAIGRKYDQRLILVGLGLNKINKSVILANTNSIKGMVNKVKHLLKIENM.

This sequence belongs to the universal ribosomal protein uL30 family. In terms of assembly, part of the 50S ribosomal subunit.

The protein is Large ribosomal subunit protein uL30 of Rickettsia africae (strain ESF-5).